We begin with the raw amino-acid sequence, 258 residues long: Phycoerythrobilin:ferredoxin oxidoreductase (258 aa).

The protein belongs to the HY2 family.

It carries out the reaction (3Z)-phycoerythrobilin + oxidized 2[4Fe-4S]-[ferredoxin] = 15,16-dihydrobiliverdin + reduced 2[4Fe-4S]-[ferredoxin] + 2 H(+). In terms of biological role, catalyzes the two-electron reduction of the C2 and C3(1) diene system of 15,16-dihydrobiliverdin. This Prochlorococcus marinus (strain NATL1A) protein is Phycoerythrobilin:ferredoxin oxidoreductase.